The sequence spans 290 residues: Signal recognition particle receptor FtsY (290 aa).

Residues 91–98 (GTNGSGKT), 173–177 (DTSGR), and 237–240 (TKVD) each bind GTP.

This sequence belongs to the GTP-binding SRP family. FtsY subfamily. Part of the signal recognition particle protein translocation system, which is composed of SRP and FtsY.

The protein resides in the cell inner membrane. It localises to the cytoplasm. It catalyses the reaction GTP + H2O = GDP + phosphate + H(+). Functionally, involved in targeting and insertion of nascent membrane proteins into the cytoplasmic membrane. Acts as a receptor for the complex formed by the signal recognition particle (SRP) and the ribosome-nascent chain (RNC). This Chlamydia pneumoniae (Chlamydophila pneumoniae) protein is Signal recognition particle receptor FtsY.